A 23-amino-acid chain; its full sequence is Phallacidin proprotein (23 aa).

Residue P1 is a propeptide. Positions 2-8 form a cross-link, cyclopeptide (Ala-Pro); the sequence is AWLVDCP. Residues 3-7 constitute a cross-link (2'-cysteinyl-6'-hydroxytryptophan sulfoxide (Trp-Cys)); that stretch reads WLVDC. A propeptide spanning residues 9 to 23 is cleaved from the precursor; it reads CVGDDVNFILTRGQK.

Belongs to the MSDIN fungal toxin family. Processed by the macrocyclase-peptidase enzyme POPB to yield a toxic cyclic heptapeptide. POPB first removes 10 residues from the N-terminus. Conformational trapping of the remaining peptide forces the enzyme to release this intermediate rather than proceed to macrocyclization. The enzyme rebinds the remaining peptide in a different conformation and catalyzes macrocyclization of the N-terminal 7 residues.

Its function is as follows. Major toxin that belongs to the bicyclic heptapeptides called phallotoxins. Although structurally related to amatoxins, phallotoxins have a different mode of action, which is the stabilization of F-actin. Phallotoxins are poisonous when administered parenterally, but not orally because of poor absorption. In Amanita fuligineoides, this protein is Phallacidin proprotein.